A 95-amino-acid chain; its full sequence is FXYD domain-containing ion transport regulator 6 (95 aa).

The N-terminal stretch at 1 to 18 (MEVVLLFLCGLLAPAVLA) is a signal peptide. Residues 19 to 35 (SATEQEKEKDPFHYDYQ) lie on the Extracellular side of the membrane. Residues 36–58 (TLRIGGLVFAVVLFSVGILLILS) form a helical membrane-spanning segment. Residues 59-95 (RRCKCSFNQKPRAPGDEEAQVENLVTANATEPQKAEN) are Cytoplasmic-facing. Residues 69–95 (PRAPGDEEAQVENLVTANATEPQKAEN) form a disordered region.

This sequence belongs to the FXYD family. In terms of assembly, regulatory subunit of the sodium/potassium-transporting ATPase which is composed of a catalytic alpha subunit, a non-catalytic beta subunit and an additional regulatory subunit. The regulatory subunit, a member of the FXYD protein family, modulates the enzymatic activity in a tissue- and isoform-specific way by changing affinities of the Na+/K+-ATPase toward Na(+), K(+) or ATP.

It is found in the cell membrane. Its function is as follows. Associates with and regulates the activity of the sodium/potassium-transporting ATPase (NKA) which catalyzes the hydrolysis of ATP coupled with the exchange of Na(+) and K(+) ions across the plasma membrane. Reduces the apparent affinity for intracellular Na(+) with no change in the apparent affinity for extracellular K(+). In addition to modulating NKA kinetics, may also function as a regulator of NKA localization to the plasma membrane. This Bos taurus (Bovine) protein is FXYD domain-containing ion transport regulator 6 (FXYD6).